Consider the following 60-residue polypeptide: Large ribosomal subunit protein uL30 (60 aa).

This sequence belongs to the universal ribosomal protein uL30 family. Part of the 50S ribosomal subunit.

In Leuconostoc citreum (strain KM20), this protein is Large ribosomal subunit protein uL30.